We begin with the raw amino-acid sequence, 567 residues long: Thiol:disulfide interchange protein DsbD (567 aa).

Positions 1–19 (MAQRIFTLILLLCSTSAFA) are cleaved as a signal peptide. Cystine bridges form between cysteine 122-cysteine 128 and cysteine 185-cysteine 307. 7 consecutive transmembrane segments (helical) span residues 170–192 (ALWA…MYPL), 212–234 (LAFI…VAAA), 246–268 (YVLI…LFTL), 297–319 (GAIA…LLYI), 326–348 (WLGG…LVTV), 358–380 (GPWM…VFLL), and 387–409 (AWGL…ITSL). The region spanning 435-567 (QDWAFGSPSA…FSAHLHDRQP (133 aa)) is the Thioredoxin domain. A disulfide bridge links cysteine 482 with cysteine 485.

The protein belongs to the thioredoxin family. DsbD subfamily.

Its subcellular location is the cell inner membrane. It carries out the reaction [protein]-dithiol + NAD(+) = [protein]-disulfide + NADH + H(+). The enzyme catalyses [protein]-dithiol + NADP(+) = [protein]-disulfide + NADPH + H(+). Required to facilitate the formation of correct disulfide bonds in some periplasmic proteins and for the assembly of the periplasmic c-type cytochromes. Acts by transferring electrons from cytoplasmic thioredoxin to the periplasm. This transfer involves a cascade of disulfide bond formation and reduction steps. The sequence is that of Thiol:disulfide interchange protein DsbD from Salmonella typhi.